The chain runs to 131 residues: UPF0102 protein Ent638_3585 (131 aa).

Residues 1–20 (MAQIPAGADRPGKLSRKQTG) are disordered.

The protein belongs to the UPF0102 family.

The protein is UPF0102 protein Ent638_3585 of Enterobacter sp. (strain 638).